Here is a 418-residue protein sequence, read N- to C-terminus: cAMP-dependent protein kinase type II-beta regulatory subunit (418 aa).

The tract at residues 2–153 (SIEIPAGLTE…RLQEACKDIL (152 aa)) is dimerization and phosphorylation. Residues 45 to 57 (RKGTARFGHEGRT) show a composition bias toward basic and acidic residues. The tract at residues 45–98 (RKGTARFGHEGRTWGDAGAAGGGGTPSKGVNFAEEPRHSDSENGEEEEEEAADA) is disordered. Threonine 69 carries the phosphothreonine modification. 2 positions are modified to phosphoserine: serine 83 and serine 85. The segment covering 86–96 (ENGEEEEEEAA) has biased composition (acidic residues). A Phosphoserine modification is found at serine 114. Residues 154 to 275 (LFKN…ESLP), glutamate 223, arginine 232, 276 to 418 (FLKS…EPTA), glutamate 352, and arginine 361 contribute to the 3',5'-cyclic AMP site.

Belongs to the cAMP-dependent kinase regulatory chain family. In terms of assembly, the inactive form of the enzyme is composed of two regulatory chains and two catalytic chains. Activation by cAMP produces two active catalytic monomers and a regulatory dimer that binds four cAMP molecules. Interacts with PRKACA and PRKACB. Interacts with the phosphorylated form of PJA2. Forms a complex composed of PRKAR2B, GSK3B and GSKIP through GSKIP interaction; facilitates PKA-induced phosphorylation and regulates GSK3B activity. Post-translationally, phosphorylated by the activated catalytic chain. In terms of tissue distribution, four types of regulatory chains are found: I-alpha, I-beta, II-alpha, and II-beta. Their expression varies among tissues and is in some cases constitutive and in others inducible.

It is found in the cytoplasm. It localises to the cell membrane. In terms of biological role, regulatory subunit of the cAMP-dependent protein kinases involved in cAMP signaling in cells. Type II regulatory chains mediate membrane association by binding to anchoring proteins, including the MAP2 kinase. The polypeptide is cAMP-dependent protein kinase type II-beta regulatory subunit (PRKAR2B) (Bos taurus (Bovine)).